Consider the following 1535-residue polypeptide: Putative protein TIC 214 C-terminal part (1535 aa).

Disordered regions lie at residues 264–283 (ENQK…NSND), 312–333 (EQQE…SRKA), and 1263–1282 (DYKE…KNNK).

This sequence belongs to the TIC214 family. Part of the Tic complex.

Its subcellular location is the plastid. The protein resides in the chloroplast. Functionally, involved in protein precursor import into chloroplasts. May be part of an intermediate translocation complex acting as a protein-conducting channel at the inner envelope. In Piper cenocladum (Ant piper), this protein is Putative protein TIC 214 C-terminal part.